A 360-amino-acid chain; its full sequence is 3-dehydroquinate synthase (360 aa).

Residues 70-75 (DGEKYK), 104-108 (GVIGD), 128-129 (TT), Lys-141, and Lys-150 each bind NAD(+). 3 residues coordinate Zn(2+): Glu-183, His-246, and His-263.

Belongs to the sugar phosphate cyclases superfamily. Dehydroquinate synthase family. It depends on Co(2+) as a cofactor. Requires Zn(2+) as cofactor. The cofactor is NAD(+).

It is found in the cytoplasm. The enzyme catalyses 7-phospho-2-dehydro-3-deoxy-D-arabino-heptonate = 3-dehydroquinate + phosphate. It functions in the pathway metabolic intermediate biosynthesis; chorismate biosynthesis; chorismate from D-erythrose 4-phosphate and phosphoenolpyruvate: step 2/7. Functionally, catalyzes the conversion of 3-deoxy-D-arabino-heptulosonate 7-phosphate (DAHP) to dehydroquinate (DHQ). The sequence is that of 3-dehydroquinate synthase from Acinetobacter baumannii (strain SDF).